The following is a 252-amino-acid chain: Neurotrophic factor BDNF precursor form (252 aa).

The first 18 residues, 1–18, serve as a signal peptide directing secretion; it reads MTILFLTMVISYFGCMKA. Positions 19–133 are excised as a propeptide; the sequence is APMKEANVRG…AANMSMRVRR (115 aa). The disordered stretch occupies residues 43–62; it reads LESVNGPKAGSRGLTSSSSS. An N-linked (GlcNAc...) asparagine glycan is attached at Asn126. Intrachain disulfides connect Cys146–Cys213, Cys191–Cys242, and Cys201–Cys244.

Belongs to the NGF-beta family. In terms of assembly, monomers and homodimers. Binds to NTRK2/TRKB. Can form heterodimers with other neurotrophin family members, such as NTF3 and NTF4 (in vitro), but the physiological relevance of this is not clear. BDNF precursor form: interacts with the heterodimer formed by NGFR and SORCS2. Mature BDNF has much lower affinity for the heterodimer formed by NGFR and SORCS2. N-glycosylated and glycosulfated, contrary to mature BDNF. Post-translationally, mature BDNF is produced by proteolytic removal of the propeptide, catalyzed by a FURIN family member. In addition, the precursor form is proteolytically cleaved within the propeptide, but this is not an obligatory intermediate for the production of mature BDNF. Can be converted into mature BDNF by plasmin (PLG). Brain and central nervous system.

The protein localises to the secreted. Functionally, important signaling molecule that activates signaling cascades downstream of NTRK2. During development, promotes the survival and differentiation of selected neuronal populations of the peripheral and central nervous systems. Participates in axonal growth, pathfinding and in the modulation of dendritic growth and morphology. Major regulator of synaptic transmission and plasticity at adult synapses in many regions of the CNS. The versatility of BDNF is emphasized by its contribution to a range of adaptive neuronal responses including long-term potentiation (LTP), long-term depression (LTD), certain forms of short-term synaptic plasticity, as well as homeostatic regulation of intrinsic neuronal excitability. Important signaling molecule that activates signaling cascades downstream of NTRK2. Activates signaling cascades via the heterodimeric receptor formed by NGFR and SORCS2. Signaling via NGFR and SORCS2 plays a role in synaptic plasticity and long-term depression (LTD). Binding to NGFR and SORCS2 promotes neuronal apoptosis. Promotes neuronal growth cone collapse. The protein is Neurotrophic factor BDNF precursor form (BDNF) of Sus scrofa (Pig).